Consider the following 154-residue polypeptide: Interleukin-2 (154 aa).

The first 20 residues, 1–20, serve as a signal peptide directing secretion; the sequence is MYRMQLLSCIALSLALVTNS. O-linked (GalNAc...) threonine glycosylation is present at T23. C78 and C126 form a disulfide bridge.

It belongs to the IL-2 family.

It localises to the secreted. Functionally, cytokine produced by activated CD4-positive helper T-cells and to a lesser extend activated CD8-positive T-cells and natural killer (NK) cells that plays pivotal roles in the immune response and tolerance. Binds to a receptor complex composed of either the high-affinity trimeric IL-2R (IL2RA/CD25, IL2RB/CD122 and IL2RG/CD132) or the low-affinity dimeric IL-2R (IL2RB and IL2RG). Interaction with the receptor leads to oligomerization and conformation changes in the IL-2R subunits resulting in downstream signaling starting with phosphorylation of JAK1 and JAK3. In turn, JAK1 and JAK3 phosphorylate the receptor to form a docking site leading to the phosphorylation of several substrates including STAT5. This process leads to activation of several pathways including STAT, phosphoinositide-3-kinase/PI3K and mitogen-activated protein kinase/MAPK pathways. Functions as a T-cell growth factor and can increase NK-cell cytolytic activity as well. Promotes strong proliferation of activated B-cells and subsequently immunoglobulin production. Plays a pivotal role in regulating the adaptive immune system by controlling the survival and proliferation of regulatory T-cells, which are required for the maintenance of immune tolerance. Moreover, participates in the differentiation and homeostasis of effector T-cell subsets, including Th1, Th2, Th17 as well as memory CD8-positive T-cells. The protein is Interleukin-2 (IL2) of Papio anubis (Olive baboon).